The primary structure comprises 348 residues: NADH-quinone oxidoreductase subunit H (348 aa).

The next 8 helical transmembrane spans lie at 7–27 (IWLLPLLIIVGKTLLLLVVLL), 82–102 (GVFLLAPFVSATLALSTWAVI), 115–135 (VGLLYILAISSLEVYGVIMGG), 161–181 (IGFVLVTVILVSGSLDLTTIV), 199–219 (FLDWNWLVLFPMFIIFFISAL), 251–271 (LFFLGEYVAIVLMCALTTILF), 287–307 (VPGIIWFVLKVCFVFFWFAMV), and 322–342 (LGWKVFLPFSLAMVVITATFL).

The protein belongs to the complex I subunit 1 family. In terms of assembly, NDH-1 is composed of 14 different subunits. Subunits NuoA, H, J, K, L, M, N constitute the membrane sector of the complex.

The protein resides in the cell inner membrane. It catalyses the reaction a quinone + NADH + 5 H(+)(in) = a quinol + NAD(+) + 4 H(+)(out). NDH-1 shuttles electrons from NADH, via FMN and iron-sulfur (Fe-S) centers, to quinones in the respiratory chain. The immediate electron acceptor for the enzyme in this species is believed to be ubiquinone. Couples the redox reaction to proton translocation (for every two electrons transferred, four hydrogen ions are translocated across the cytoplasmic membrane), and thus conserves the redox energy in a proton gradient. This subunit may bind ubiquinone. This is NADH-quinone oxidoreductase subunit H from Bartonella quintana (strain Toulouse) (Rochalimaea quintana).